The chain runs to 263 residues: Probable ABC transporter permease protein slr1045 (263 aa).

Helical transmembrane passes span 12–32, 52–72, 97–117, 140–162, 167–186, 192–212, and 234–254; these read LWFQ…LHIL, SMAI…IQVA, APVL…AAEI, LVVP…SLFV, GLVI…LNSV, LWDV…IAII, and AVVT…WLMF.

The protein belongs to the MlaE permease family.

It localises to the cell membrane. Its function is as follows. Could be part of an ABC transporter complex. The sequence is that of Probable ABC transporter permease protein slr1045 from Synechocystis sp. (strain ATCC 27184 / PCC 6803 / Kazusa).